A 72-amino-acid chain; its full sequence is Cytochrome c oxidase subunit 2 (72 aa).

The Mitochondrial intermembrane segment spans residues 1–14; it reads MAHPSQLGFQDAAS. A helical membrane pass occupies residues 15-45; the sequence is PVMEELLHFHDHALMIVFLISTLVLYIIVAM. Residues 46 to 72 lie on the Mitochondrial matrix side of the membrane; it reads VSTKLTNKHILDSQEVEIVWTILPAVI.

Belongs to the cytochrome c oxidase subunit 2 family. In terms of assembly, component of the cytochrome c oxidase (complex IV, CIV), a multisubunit enzyme composed of 14 subunits. The complex is composed of a catalytic core of 3 subunits MT-CO1, MT-CO2 and MT-CO3, encoded in the mitochondrial DNA, and 11 supernumerary subunits COX4I, COX5A, COX5B, COX6A, COX6B, COX6C, COX7A, COX7B, COX7C, COX8 and NDUFA4, which are encoded in the nuclear genome. The complex exists as a monomer or a dimer and forms supercomplexes (SCs) in the inner mitochondrial membrane with NADH-ubiquinone oxidoreductase (complex I, CI) and ubiquinol-cytochrome c oxidoreductase (cytochrome b-c1 complex, complex III, CIII), resulting in different assemblies (supercomplex SCI(1)III(2)IV(1) and megacomplex MCI(2)III(2)IV(2)). Found in a complex with TMEM177, COA6, COX18, COX20, SCO1 and SCO2. Interacts with TMEM177 in a COX20-dependent manner. Interacts with COX20. Interacts with COX16. Requires Cu cation as cofactor.

It is found in the mitochondrion inner membrane. The enzyme catalyses 4 Fe(II)-[cytochrome c] + O2 + 8 H(+)(in) = 4 Fe(III)-[cytochrome c] + 2 H2O + 4 H(+)(out). Its function is as follows. Component of the cytochrome c oxidase, the last enzyme in the mitochondrial electron transport chain which drives oxidative phosphorylation. The respiratory chain contains 3 multisubunit complexes succinate dehydrogenase (complex II, CII), ubiquinol-cytochrome c oxidoreductase (cytochrome b-c1 complex, complex III, CIII) and cytochrome c oxidase (complex IV, CIV), that cooperate to transfer electrons derived from NADH and succinate to molecular oxygen, creating an electrochemical gradient over the inner membrane that drives transmembrane transport and the ATP synthase. Cytochrome c oxidase is the component of the respiratory chain that catalyzes the reduction of oxygen to water. Electrons originating from reduced cytochrome c in the intermembrane space (IMS) are transferred via the dinuclear copper A center (CU(A)) of subunit 2 and heme A of subunit 1 to the active site in subunit 1, a binuclear center (BNC) formed by heme A3 and copper B (CU(B)). The BNC reduces molecular oxygen to 2 water molecules using 4 electrons from cytochrome c in the IMS and 4 protons from the mitochondrial matrix. This is Cytochrome c oxidase subunit 2 (mt-co2) from Atractosteus spatula (Alligator gar).